A 207-amino-acid polypeptide reads, in one-letter code: Ras-related protein RABH1e (207 aa).

Residue 16 to 23 (GDQSVGKT) coordinates GTP. The Effector region motif lies at 38–46 (YQATIGIDF). GTP is bound by residues 64–68 (DTAGQ), 122–125 (NKTD), and 152–153 (SA). S-geranylgeranyl cysteine attachment occurs at residues C205 and C207. Cysteine methyl ester is present on C207.

Belongs to the small GTPase superfamily. Rab family.

It localises to the golgi apparatus membrane. In terms of biological role, protein transport. Regulator of membrane traffic from the Golgi apparatus towards the endoplasmic reticulum (ER). This is Ras-related protein RABH1e (RABH1E) from Arabidopsis thaliana (Mouse-ear cress).